The sequence spans 296 residues: Phosphatidylglycerol--prolipoprotein diacylglyceryl transferase (296 aa).

Helical transmembrane passes span 17-37, 59-79, and 97-117; these read LAVR…IVVG, MMFY…VLFY, and GGMS…LFAW. Arg142 contributes to the a 1,2-diacyl-sn-glycero-3-phospho-(1'-sn-glycerol) binding site. The next 2 membrane-spanning stretches (helical) occupy residues 230–250 and 265–285; these read MGAI…TVEF and LSMG…MMIW.

This sequence belongs to the Lgt family.

It is found in the cell inner membrane. It carries out the reaction L-cysteinyl-[prolipoprotein] + a 1,2-diacyl-sn-glycero-3-phospho-(1'-sn-glycerol) = an S-1,2-diacyl-sn-glyceryl-L-cysteinyl-[prolipoprotein] + sn-glycerol 1-phosphate + H(+). It functions in the pathway protein modification; lipoprotein biosynthesis (diacylglyceryl transfer). In terms of biological role, catalyzes the transfer of the diacylglyceryl group from phosphatidylglycerol to the sulfhydryl group of the N-terminal cysteine of a prolipoprotein, the first step in the formation of mature lipoproteins. This chain is Phosphatidylglycerol--prolipoprotein diacylglyceryl transferase, found in Burkholderia thailandensis (strain ATCC 700388 / DSM 13276 / CCUG 48851 / CIP 106301 / E264).